A 368-amino-acid chain; its full sequence is Phosphate acyltransferase (368 aa).

Residues 337–368 (LGEGEHNAGGAGHASPAAGHHAEPSAAQSSKA) are disordered. Residues 349 to 368 (HASPAAGHHAEPSAAQSSKA) are compositionally biased toward low complexity.

It belongs to the PlsX family. In terms of assembly, homodimer. Probably interacts with PlsY.

The protein resides in the cytoplasm. The enzyme catalyses a fatty acyl-[ACP] + phosphate = an acyl phosphate + holo-[ACP]. Its pathway is lipid metabolism; phospholipid metabolism. Functionally, catalyzes the reversible formation of acyl-phosphate (acyl-PO(4)) from acyl-[acyl-carrier-protein] (acyl-ACP). This enzyme utilizes acyl-ACP as fatty acyl donor, but not acyl-CoA. The chain is Phosphate acyltransferase from Burkholderia lata (strain ATCC 17760 / DSM 23089 / LMG 22485 / NCIMB 9086 / R18194 / 383).